A 126-amino-acid chain; its full sequence is Desulfoferrodoxin (126 aa).

The Fe cation site is built by Cys10, Cys13, Cys29, Cys30, His49, His69, His75, Cys116, and His119.

It belongs to the desulfoferrodoxin family. Homodimer. Fe(3+) is required as a cofactor. The cofactor is Cu(2+).

It catalyses the reaction reduced [rubredoxin] + superoxide + 2 H(+) = oxidized [rubredoxin] + H2O2. Functionally, catalyzes the one-electron reduction of superoxide anion radical to hydrogen peroxide at a nonheme ferrous iron center. Plays a fundamental role in case of oxidative stress via its superoxide detoxification activity. The protein is Desulfoferrodoxin (dfx) of Syntrophotalea carbinolica (strain DSM 2380 / NBRC 103641 / GraBd1) (Pelobacter carbinolicus).